Here is a 329-residue protein sequence, read N- to C-terminus: Olfactory receptor 52L1 (329 aa).

Over 1–43 the chain is Extracellular; sequence MTLVSFFSFLSKPLIMLLSNSSWRLSQPSFLLVGIPGLEESQH. Asn-20 carries N-linked (GlcNAc...) asparagine glycosylation. Residues 44–64 form a helical membrane-spanning segment; the sequence is WIALPLGILYLLALVGNVTIL. The Cytoplasmic segment spans residues 65–72; it reads FIIWMDPS. Residues 73-93 traverse the membrane as a helical segment; the sequence is LHQSMYLFLSMLAAIDLVLAS. Residues 94–117 are Extracellular-facing; sequence STAPKALAVLLVHAHEIGYIVCLI. Cys-115 and Cys-207 are oxidised to a cystine. Residues 118–138 traverse the membrane as a helical segment; sequence QMFFIHAFSSMESGVLVAMAL. Topologically, residues 139–157 are cytoplasmic; it reads DRYVAICHPLHHSTILHPG. Residues 158 to 178 traverse the membrane as a helical segment; it reads VIGRIGMVVLVRGLLLLIPFP. The Extracellular segment spans residues 179–214; that stretch reads ILLGTLIFCQATIIGHAYCEHMAVVKLACSETTVNR. A helical membrane pass occupies residues 215–235; that stretch reads AYGLTMALLVIGLDVLAIGVS. The Cytoplasmic segment spans residues 236–255; sequence YAHILQAVLKVPGSEARLKA. The helical transmembrane segment at 256–276 threads the bilayer; it reads FSTCGSHICVILVFYVPGIFS. Residues 277-291 are Extracellular-facing; that stretch reads FLTHRFGHHVPHHVH. Residues 292–312 form a helical membrane-spanning segment; sequence VLLATRYLLMPPALNPLVYGV. At 313 to 329 the chain is on the cytoplasmic side; it reads KTQQIRQRVLRVFTQKD.

Belongs to the G-protein coupled receptor 1 family.

The protein resides in the cell membrane. Its function is as follows. Odorant receptor. The chain is Olfactory receptor 52L1 (OR52L1) from Homo sapiens (Human).